Consider the following 209-residue polypeptide: Histidine biosynthesis bifunctional protein HisIE (209 aa).

The interval 1–116 (MKQADELRFN…EEQAADRFGI (116 aa)) is phosphoribosyl-AMP cyclohydrolase. Residues 117–209 (MNELERVIAE…LKKRHSEIEE (93 aa)) form a phosphoribosyl-ATP pyrophosphohydrolase region.

The protein in the N-terminal section; belongs to the PRA-CH family. This sequence in the C-terminal section; belongs to the PRA-PH family.

Its subcellular location is the cytoplasm. It catalyses the reaction 1-(5-phospho-beta-D-ribosyl)-ATP + H2O = 1-(5-phospho-beta-D-ribosyl)-5'-AMP + diphosphate + H(+). The enzyme catalyses 1-(5-phospho-beta-D-ribosyl)-5'-AMP + H2O = 1-(5-phospho-beta-D-ribosyl)-5-[(5-phospho-beta-D-ribosylamino)methylideneamino]imidazole-4-carboxamide. Its pathway is amino-acid biosynthesis; L-histidine biosynthesis; L-histidine from 5-phospho-alpha-D-ribose 1-diphosphate: step 2/9. It functions in the pathway amino-acid biosynthesis; L-histidine biosynthesis; L-histidine from 5-phospho-alpha-D-ribose 1-diphosphate: step 3/9. The polypeptide is Histidine biosynthesis bifunctional protein HisIE (hisI) (Bacillus subtilis (strain 168)).